The following is a 353-amino-acid chain: 3-isopropylmalate dehydrogenase (353 aa).

76–89 is a binding site for NAD(+); sequence GPKWDDPRAKVRPE. Positions 96, 106, 134, and 223 each coordinate substrate. Residues Asp-223, Asp-247, and Asp-251 each coordinate Mg(2+). 281–293 contacts NAD(+); it reads GSAPDIAGKGIAN.

It belongs to the isocitrate and isopropylmalate dehydrogenases family. LeuB type 1 subfamily. In terms of assembly, homodimer. Requires Mg(2+) as cofactor. Mn(2+) is required as a cofactor.

It localises to the cytoplasm. The catalysed reaction is (2R,3S)-3-isopropylmalate + NAD(+) = 4-methyl-2-oxopentanoate + CO2 + NADH. It participates in amino-acid biosynthesis; L-leucine biosynthesis; L-leucine from 3-methyl-2-oxobutanoate: step 3/4. Its function is as follows. Catalyzes the oxidation of 3-carboxy-2-hydroxy-4-methylpentanoate (3-isopropylmalate) to 3-carboxy-4-methyl-2-oxopentanoate. The product decarboxylates to 4-methyl-2 oxopentanoate. This is 3-isopropylmalate dehydrogenase from Anaeromyxobacter dehalogenans (strain 2CP-C).